A 2173-amino-acid polypeptide reads, in one-letter code: Mediator of RNA polymerase II transcription subunit 12 (2173 aa).

Disordered stretches follow at residues 1-34, 318-345, 630-718, 784-804, 1380-1404, 1443-1467, 1737-1780, and 2020-2068; these read MAAF…QKED, GGHQ…AGGN, ASNS…KGMD, KSTA…KPEA, MNSS…NSAS, ELEK…KSMS, EEEP…VKQE, and QGIH…FRPQ. Residues 702–717 show a composition bias toward basic and acidic residues; that stretch reads QAQEQESKSTAKDKGM. Positions 1389 to 1404 are enriched in low complexity; the sequence is GSAVSGSSVSNSNSAS. Composition is skewed to basic and acidic residues over residues 1443–1462 and 1747–1759; these read ELEK…DRQK and EPDK…KVEK. Over residues 2034 to 2057 the composition is skewed to low complexity; it reads QQQQQQQQQQQQQQQQQQVHQQQQ.

The protein belongs to the Mediator complex subunit 12 family. As to quaternary structure, component of the Mediator complex.

The protein resides in the nucleus. In terms of biological role, component of the Mediator complex, a coactivator involved in regulated gene transcription of nearly all RNA polymerase II-dependent genes. Mediator functions as a bridge to convey information from gene-specific regulatory proteins to the basal RNA polymerase II transcription machinery. Mediator is recruited to promoters by direct interactions with regulatory proteins and serves as a scaffold for the assembly of a functional preinitiation complex with RNA polymerase II and the general transcription factors. Required for development of the body axis, brain, ear, kidney, forelimb and neural crest and for pigmentation. Acts as a coactivator for sox9a and/or sox9b promoting the expression of several neuronal determination genes. This is Mediator of RNA polymerase II transcription subunit 12 (med12) from Danio rerio (Zebrafish).